Here is a 418-residue protein sequence, read N- to C-terminus: Cell division protein FtsA (418 aa).

The protein belongs to the FtsA/MreB family. In terms of assembly, self-interacts. Interacts with FtsZ.

Its subcellular location is the cell inner membrane. Its function is as follows. Cell division protein that is involved in the assembly of the Z ring. May serve as a membrane anchor for the Z ring. This Buchnera aphidicola subsp. Schizaphis graminum (strain Sg) protein is Cell division protein FtsA.